The sequence spans 315 residues: Probable diguanylate cyclase DgcF (315 aa).

4 helical membrane passes run 10–30 (FSTG…GVLP), 41–61 (IALI…SLAF), 80–100 (LLTF…VIDI), and 116–136 (LGIA…AAIN). Residues 173–310 (QHLTVMLLDI…GRNRTSTMRY (138 aa)) form the GGDEF domain. D181 and I182 together coordinate Mg(2+). 3 residues coordinate substrate: N189, H194, and D198. E224 contributes to the Mg(2+) binding site.

Homodimer. Requires Mg(2+) as cofactor.

Its subcellular location is the cell membrane. It catalyses the reaction 2 GTP = 3',3'-c-di-GMP + 2 diphosphate. It functions in the pathway purine metabolism; 3',5'-cyclic di-GMP biosynthesis. Catalyzes the synthesis of cyclic-di-GMP (c-di-GMP) via the condensation of 2 GTP molecules. In Escherichia coli (strain K12), this protein is Probable diguanylate cyclase DgcF.